A 2131-amino-acid chain; its full sequence is Protein Ycf2 (2131 aa).

1466 to 1473 (GSIGTGRS) lines the ATP pocket.

This sequence belongs to the Ycf2 family.

The protein resides in the plastid. It localises to the chloroplast stroma. Its function is as follows. Probable ATPase of unknown function. Its presence in a non-photosynthetic plant (Epifagus virginiana) and experiments in tobacco indicate that it has an essential function which is probably not related to photosynthesis. In Helianthus annuus (Common sunflower), this protein is Protein Ycf2.